Here is an 87-residue protein sequence, read N- to C-terminus: Putative BTB/POZ domain-containing protein At3g29740 (87 aa).

The region spanning 24-87 (VDVRLKAGDS…KHTELVALVE (64 aa)) is the BTB domain.

The protein operates within protein modification; protein ubiquitination. In terms of biological role, may act as a substrate-specific adapter of an E3 ubiquitin-protein ligase complex (CUL3-RBX1-BTB) which mediates the ubiquitination and subsequent proteasomal degradation of target proteins. This Arabidopsis thaliana (Mouse-ear cress) protein is Putative BTB/POZ domain-containing protein At3g29740.